The sequence spans 1070 residues: MRSIKAASLTPLLAALFTTLSSTLALPSSVWEHQLETNVLALRDTNNNGSSSTISPSFDVTKCPGYKLVGQPQQSQHGFTAQLSLAGDACNAYGVDIANLTLSVVYEKQHQLHVHIYDTAKQQYQLPNGLIFDRPGDNPADIQNGSTADQSDLVFHHTAENGTQSGNGGWAFWIARKSSGDVIFDTRASNIPTYNDGLSSVSSNTKRNTTAMPAHEMVFENQYLQISSALPTGANIYGLGEYVTGSFRRNPDETLQPFFTLDAGTPVDSNMYGYHPIYTEARRGSDGKLRTHSVHLQNTAGMDVLLRRGVIQYRAIGGTLDFRFFSGDQPASSSSSSSGNDKAVATVKNSPNTAIQQYVNFIGNPVIHPYWSYGFHLCRWGYNNVSETQAVIDAMRQNNIPLEVQWNDIDYLQEFRDFTTDPQRFPQKEFAAMIAKLKDNHQHYIPIIDMAIPKAPTNDTDVYYPGTRGDELDVFIKNRNGSQYIGEVWPGYTNFVDQQAENAGKWWTEAIRNFSEIVDFSGIWLDMNEPSSFVIGNAAGPETNLSNTPAYTAATSVAGWPQGYNNLTWGTSGNITVNGSYTYQQGPVQNNDGSKQRRSLLLSRDEDVLVQRDINVNGGNGDKFGPEDPNYQYANSSQRYLSNPPYAIHNGIHISETPLNVNLDKKTVAMEAVGVDGQRAFYDVHNLDGTLEEQHFYNALRDIRPQERPFLISRSTYPGAGKFTGHWLGDNYALWTILPGEEAYKAGAGMAQSIDGVLQFQIFGIHLIGADICGFNRNSDEELCNRWMMLGAFLPFMRNHNTIGAIAQEPFRWDSVANASRIAINKRYEILPSLYSHMAQSAESGEPAVRALWYEFDEVFEQTKDYAHQFLFGDDLLVSPVLEPNVTQIKALFPNAGGKWRNVFSYEALDVEYNKNVTVDAALSTINVHLRPGKVLLTHSKPAYTVYETAQSPYGLIVNLNDQGEAKQTFYLDDGMTPAPTPNSTLTVSAGNNSVNGSIEGEYKAQQNLTYVVVLDVKQKPTQVMMGGNKTEFSWDQQKTLLNVTGLNADLNGSGRFRGLRLELSLLCED.

The signal sequence occupies residues 1–35 (MRSIKAASLTPLLAALFTTLSSTLALPSSVWEHQL). N-linked (GlcNAc...) asparagine glycosylation is found at Asn-48, Asn-99, Asn-144, Asn-161, Asn-208, Asn-384, Asn-458, Asn-480, and Asn-513. The Nucleophile role is filled by Asp-526. Residue Glu-529 is part of the active site. Asn-544, Asn-566, Asn-574, Asn-578, and Asn-635 each carry an N-linked (GlcNAc...) asparagine glycan. Asp-730 functions as the Proton donor in the catalytic mechanism. Asn-818, Asn-885, Asn-916, Asn-983, Asn-992, Asn-996, Asn-1008, Asn-1029, Asn-1043, and Asn-1052 each carry an N-linked (GlcNAc...) asparagine glycan.

It belongs to the glycosyl hydrolase 31 family.

It catalyses the reaction Hydrolysis of terminal, non-reducing (1-&gt;4)-linked alpha-D-glucose residues with release of alpha-D-glucose.. In terms of biological role, hydrolyzes a broad range of alpha-D-linked glucopyranosides, including maltose (alpha-1,4), sucrose (alpha-1,2), isomaltose (alpha-1,6) and turanose (alpha-1,3). This is Alpha-glucosidase from Candida tsukubaensis (Yeast).